We begin with the raw amino-acid sequence, 646 residues long: DNA mismatch repair protein MutL (646 aa).

Disordered regions lie at residues F356–S380 and T415–H452. Low complexity predominate over residues S424–I436.

Belongs to the DNA mismatch repair MutL/HexB family.

In terms of biological role, this protein is involved in the repair of mismatches in DNA. It is required for dam-dependent methyl-directed DNA mismatch repair. May act as a 'molecular matchmaker', a protein that promotes the formation of a stable complex between two or more DNA-binding proteins in an ATP-dependent manner without itself being part of a final effector complex. The chain is DNA mismatch repair protein MutL from Staphylococcus carnosus (strain TM300).